Here is a 616-residue protein sequence, read N- to C-terminus: Dihydroxy-acid dehydratase (616 aa).

Asp81 contributes to the Mg(2+) binding site. Residue Cys122 participates in [2Fe-2S] cluster binding. Positions 123 and 124 each coordinate Mg(2+). Lys124 carries the post-translational modification N6-carboxylysine. Cys195 serves as a coordination point for [2Fe-2S] cluster. Mg(2+) is bound at residue Glu491. Ser517 functions as the Proton acceptor in the catalytic mechanism.

It belongs to the IlvD/Edd family. In terms of assembly, homodimer. [2Fe-2S] cluster serves as cofactor. Mg(2+) is required as a cofactor.

It catalyses the reaction (2R)-2,3-dihydroxy-3-methylbutanoate = 3-methyl-2-oxobutanoate + H2O. The enzyme catalyses (2R,3R)-2,3-dihydroxy-3-methylpentanoate = (S)-3-methyl-2-oxopentanoate + H2O. It participates in amino-acid biosynthesis; L-isoleucine biosynthesis; L-isoleucine from 2-oxobutanoate: step 3/4. Its pathway is amino-acid biosynthesis; L-valine biosynthesis; L-valine from pyruvate: step 3/4. Functions in the biosynthesis of branched-chain amino acids. Catalyzes the dehydration of (2R,3R)-2,3-dihydroxy-3-methylpentanoate (2,3-dihydroxy-3-methylvalerate) into 2-oxo-3-methylpentanoate (2-oxo-3-methylvalerate) and of (2R)-2,3-dihydroxy-3-methylbutanoate (2,3-dihydroxyisovalerate) into 2-oxo-3-methylbutanoate (2-oxoisovalerate), the penultimate precursor to L-isoleucine and L-valine, respectively. This Azoarcus sp. (strain BH72) protein is Dihydroxy-acid dehydratase.